The following is a 78-amino-acid chain: Large ribosomal subunit protein bL28 (78 aa).

Belongs to the bacterial ribosomal protein bL28 family.

This chain is Large ribosomal subunit protein bL28, found in Haemophilus influenzae (strain 86-028NP).